The chain runs to 187 residues: MSPWIKHICLVLVAAFMLVKTTESKKDEALYCSACMAIADEINYSISQTDPKKMIHVGGFRLKPDGSLTDKKVPLARSETYLTELLEEVCKSMSDYALYENPDTKEKSYKRFAPRDNDGGNFPDFKNFKFDGPESSSALKFACESIVEELEDDIISLFASDSDHVAKTLCSEVSDHCKSSVFQHSEL.

The signal sequence occupies residues 1-24; the sequence is MSPWIKHICLVLVAAFMLVKTTES. The 154-residue stretch at 28-181 folds into the Saposin B-type domain; the sequence is EALYCSACMA…EVSDHCKSSV (154 aa). 3 disulfide bridges follow: cysteine 32/cysteine 177, cysteine 35/cysteine 170, and cysteine 90/cysteine 143. The Prevents secretion from ER motif lies at 184 to 187; that stretch reads HSEL.

It belongs to the canopy family. In terms of assembly, homodimer. Interacts with fgfr1.

Its subcellular location is the endoplasmic reticulum. In terms of biological role, involved in the maintenance of the midbrain-hindbrain boundary (MHB) organizer. Contributes to a positive-feedback loop of FGF signaling in the MHB, enabling the MHB to exert its role as an organizer for the tectal and cerebellar development. The protein is Protein canopy-1 (cnpy1) of Danio rerio (Zebrafish).